The sequence spans 162 residues: Retinoic acid receptor responder protein 2 (162 aa).

An N-terminal signal peptide occupies residues 1–20; sequence MKCLLISLALWLGTVGTRGT. Disulfide bonds link cysteine 79–cysteine 89, cysteine 100–cysteine 119, and cysteine 103–cysteine 134. The propeptide occupies 157–162; that stretch reads RALRTK.

Post-translationally, secreted in an inactive precursor form, prochemerin, which is proteolytically processed by a variety of extracellular proteases to generate forms with differing levels of bioactivity. For example, the removal of six amino acids results in chemerin-156, which exhibits the highest activity, while removal of seven amino acids results in chemerin-155 which has slightly less activity. Some proteases are able to cleave at more than one site and chemerin forms may be sequentially processed by different enzymes to modulate activity levels. The coordinated expression and activity of chemerin-modifying enzymes is essential for regulating its bioactivation, inactivation and, consequently, biological function. Cathepsin G cleaves seven C-terminal amino acids from prochemerin (chemerin-155), elastase is able to cleave six (chemerin-156), eight (chemerin-154) or eleven (chemerin-151), plasmin cleaves five amino acids (chemerin-157), and tryptase cleaves five (chemerin-157) or eight (chemerin-154). Multiple cleavages might be required to fully activate chemerin, with an initial tryptase cleavage resulting in chemerin with low activity (chemerin-157), and a second cleavage by carboxypeptidase N or B producing highly active chemerin (chemerin-156). As to expression, expressed in the differentiated adipocytes (at protein level). Abundantly expressed in the liver, adipose tissue including visceral, epididymal, and brown adipose tissue.

The protein resides in the secreted. Functionally, adipocyte-secreted protein (adipokine) that regulates adipogenesis, metabolism and inflammation through activation of the chemokine-like receptor 1 (CMKLR1). Also acts as a ligand for CMKLR2. Can also bind to C-C chemokine receptor-like 2 (CCRL2), but with a lower affinity than it does to CMKLR1 or CMKLR2. Positively regulates adipocyte differentiation, modulates the expression of adipocyte genes involved in lipid and glucose metabolism and might play a role in angiogenesis, a process essential for the expansion of white adipose tissue. Also acts as a pro-inflammatory adipokine, causing an increase in secretion of pro-inflammatory and prodiabetic adipokines, which further impair adipose tissue metabolic function and have negative systemic effects including impaired insulin sensitivity, altered glucose and lipid metabolism, and a decrease in vascular function in other tissues. Can have both pro- and anti-inflammatory properties depending on the modality of enzymatic cleavage by different classes of proteases. Acts as a chemotactic factor for leukocyte populations expressing CMKLR1, particularly immature plasmacytoid dendritic cells, but also immature myeloid DCs, macrophages and natural killer cells. Exerts an anti-inflammatory role by preventing TNF/TNFA-induced VCAM1 expression and monocytes adhesion in vascular endothelial cells. The effect is mediated via inhibiting activation of NF-kappa-B and CRK/p38 through stimulation of AKT1/NOS3 signaling and nitric oxide production. Exhibits an antimicrobial function in the skin. In Mus musculus (Mouse), this protein is Retinoic acid receptor responder protein 2 (Rarres2).